Here is a 92-residue protein sequence, read N- to C-terminus: Late cornified envelope protein 3E (92 aa).

Residues Met1–Cys10 are compositionally biased toward low complexity. Disordered regions lie at residues Met1–Pro22 and Arg64–Cys92. Residues Gln11–Pro22 are compositionally biased toward pro residues. Residues Gly76 to Cys92 show a composition bias toward gly residues.

It belongs to the LCE family. As to quaternary structure, interacts with CYSRT1. In terms of tissue distribution, skin-specific. Expression was readily detected in adult trunk skin, adult arm skin, fetal skin, penal skin, vulva, esophagus and tongue. Not expressed in the cervix, rectum, lung, colon, or placenta.

In terms of biological role, precursors of the cornified envelope of the stratum corneum. This chain is Late cornified envelope protein 3E (LCE3E), found in Homo sapiens (Human).